Consider the following 1099-residue polypeptide: MEILYTEITQDLTEGLLEIALEELEKNRKVYYIVPSSMSFEKEKEILERLAKGSDTAVFDLLVTRFKQLPYYFDKREKATMKTELGTVGLSMLFRRVLRSFKKDEIPLYFSLQDSAGFLEMLIQLRAELLTANLSVENLPDNPKNQELKKILAKFEAELSVEYANYSEFGDFTNRLVDGEFDQQLKDVTIIIDGYTRFSAEEELFIESIQEKVARFVVGTYSDENSLTAGSETIYVGTSQMITRFRNKFPVELRKIASSAVNEVYSKLTRILDLDSRFVITDEKIELKAEDEKYFRIWEAENQKVEIERVAKEIRQKIIQGAFFKDFTVLVGDPAAYEITLKEVFDLYEIPFFYAQEESMSQHPLVIFFESLFAIKKNNYRTDDVVNLLKSKVYTDANLDEEVIDYFEYYVQKYKISGRKKFTEEFIESEFSQIELVNEMREKLLGSESPLQVFLGNNRKKTGKKWVSDLQGLLENGNVMTNMNAYFSAAELQNEHQMADKHEQVWQMLISTLNEFLAVFSDEKLKSVEFLDILLAGLKNAKYRQIPANVDVVNVKDYELVEPKTNKYIYAIGLSQTNFPRIKKNSTLLSDEERLEINQTTDENQFIEQLNVANYQKNQFTVLSLINSAKESLVLSMPQIMANEQGEFSPVFQLFLKDADEKILQKIQGVNLFESLEHIGNSRSVIAMIGQIERELVESEETSEDKRVFWSSIFRILVKSNADFQKILLDLAKDIDTVNLAPDTLEQIYGDKIYASVSSFERFYNCEYQYFLENTLSLETFENIDINSKIVGNFFHEVFEKVMKETDLSAENFDEKLTLVLQEVDKNYSRYFTQDATARFTWSNLEEIVRQTATVLKATVSTDELKTLLTESSFGLPKSELGNFSVDDIYLRGRIDRLDQLSTDYLGAIDYKSSAHSFKLQEAYDGLSLQFMTYLDVIKQAFPNQKIWGALYLQFKNQPINLSEINQLSEIANILKESMRYEGLVLEDAAEQIKGIENIALKKTNIYNEEEFEQLLKLNEEHYRAAGQRLKKGKIAINPIMKRSEGIDQSGNVRGCRYCPLKSICRFEANIHMNEHSREIGQKSQAEILAELKGEERDE.

[4Fe-4S] cluster is bound by residues Cys766, Cys1056, Cys1059, and Cys1065.

This sequence belongs to the helicase family. AddB/RexB type 2 subfamily. In terms of assembly, heterodimer of RexA (AddA) and RexB. Mg(2+) serves as cofactor. The cofactor is [4Fe-4S] cluster.

The heterodimer acts both as an ATP-dependent DNA helicase and an ATP-dependent, dual-direction single-stranded exonuclease. Recognizes the L.lactis chi site (5'-GCGCGTG-3'), which stimulates homologous recombination. This subunit has 5'-&gt;3' exonuclease activity. In terms of biological role, the heterodimer acts as both an ATP-dependent DNA helicase and an ATP-dependent, dual-direction single-stranded exonuclease. Recognizes the chi site generating a DNA molecule suitable for the initiation of homologous recombination. This subunit has 5' -&gt; 3' nuclease activity but not helicase activity. This chain is Exonuclease/helicase subunit RexB, found in Lactococcus lactis subsp. cremoris (strain MG1363).